We begin with the raw amino-acid sequence, 578 residues long: Monooxygenase cfoE (578 aa).

A helical membrane pass occupies residues 549–569; sequence IVLSGVPLVVFGSLHLVLWIF.

The protein belongs to the FMO family. FAD serves as cofactor.

The protein resides in the membrane. It participates in secondary metabolite biosynthesis; flavonoid biosynthesis. Monooxygenase; part of the gene cluster that mediates the biosynthesis of chlorflavonin, a fungal flavonoid with acetolactate synthase inhibitory activity. Within the pathway, cfoE is responsible for the chlorination of the flavonoid skeleton at position C3'. The pathway begins with the PKS-NRPS hybrid synthetase cfoA that uses benzoic acid or p-hydroxybenzoic acid as a starter unit with four rounds of chain elongation using malonyl-CoA to form the chalcone skeleton. Then, a new type of chalcone isomerase, cfoK, catalyzes the conversion of the chalcone into a flavanone by a histidine-mediated oxa-Michael addition mechanism. The desaturation of flavanone to flavone is catalyzed by a new type of flavone synthase, the flavin mononucleotide (FMN)-dependent oxidoreductase cfoJ. Monooxygenases cfoF, cfoG, and P450 cfoH are responsible for the hydroxylation of the flavonoid skeleton at sites C3, C8, and C2', respectively. Like cfoF, the dehydratase cfoI plays also a role in the hydroxylation of position C3. Methyltransferases cfoB, cfoC, and cfoD then catalyze the methylation of C7-OH, C8-OH, and C3-OH, respectively. Finally, the monooxygenase cfoE is responsible for the chlorination of flavonoid at position C3'. This chain is Monooxygenase cfoE, found in Aspergillus candidus.